A 103-amino-acid polypeptide reads, in one-letter code: Astacin-like peptidase p16 (103 aa).

One can recognise a Peptidase M12A domain in the interval 1 to 103 (NAIPGQHYRW…DAFSRDGSPM (103 aa)).

Zn(2+) is required as a cofactor.

Its function is as follows. Active against casein. Has a role as a digestive enzyme. The polypeptide is Astacin-like peptidase p16 (Argiope aurantia (Black-and-yellow garden spider)).